Reading from the N-terminus, the 130-residue chain is MSMQDPISDMLTRIRNGQAANKVAVKMPSSKLKVAIAALLKAEGYIVDFAVEGEAKPELEVTLKYFQAKPVIEQLKRVSRPGLRVYKKKDDLPSVMGGLGVAVVSTSKGLMSDRAARKAGLGGEIICYVA.

It belongs to the universal ribosomal protein uS8 family. Part of the 30S ribosomal subunit. Contacts proteins S5 and S12.

One of the primary rRNA binding proteins, it binds directly to 16S rRNA central domain where it helps coordinate assembly of the platform of the 30S subunit. This is Small ribosomal subunit protein uS8 from Vibrio vulnificus (strain CMCP6).